The chain runs to 247 residues: 5'-nucleotidase SurE (247 aa).

A divalent metal cation-binding residues include D8, D9, S39, and N91.

This sequence belongs to the SurE nucleotidase family. Requires a divalent metal cation as cofactor.

Its subcellular location is the cytoplasm. It catalyses the reaction a ribonucleoside 5'-phosphate + H2O = a ribonucleoside + phosphate. Its function is as follows. Nucleotidase that shows phosphatase activity on nucleoside 5'-monophosphates. The chain is 5'-nucleotidase SurE from Nitrosomonas europaea (strain ATCC 19718 / CIP 103999 / KCTC 2705 / NBRC 14298).